The sequence spans 255 residues: Endonuclease 8 2 (255 aa).

The active-site Schiff-base intermediate with DNA is the proline 2. The active-site Proton donor is the glutamate 3. Residue lysine 51 is the Proton donor; for beta-elimination activity of the active site. DNA-binding residues include glutamine 67 and asparagine 164. An FPG-type zinc finger spans residues 221–255 (WVYGRAGQGCRRCGTLIAYDTTDERVRYWCPACQR). The active-site Proton donor; for delta-elimination activity is the arginine 245.

Belongs to the FPG family. Requires Zn(2+) as cofactor.

It carries out the reaction 2'-deoxyribonucleotide-(2'-deoxyribose 5'-phosphate)-2'-deoxyribonucleotide-DNA = a 3'-end 2'-deoxyribonucleotide-(2,3-dehydro-2,3-deoxyribose 5'-phosphate)-DNA + a 5'-end 5'-phospho-2'-deoxyribonucleoside-DNA + H(+). In terms of biological role, involved in base excision repair of DNA damaged by oxidation or by mutagenic agents. Acts as a DNA glycosylase that recognizes and removes damaged bases. Has AP (apurinic/apyrimidinic) lyase activity and introduces nicks in the DNA strand. Cleaves the DNA backbone by beta-delta elimination to generate a single-strand break at the site of the removed base with both 3'- and 5'-phosphates. In Mycobacterium bovis (strain ATCC BAA-935 / AF2122/97), this protein is Endonuclease 8 2 (nei2).